The primary structure comprises 314 residues: Serine acetyltransferase 1, chloroplastic (314 aa).

This sequence belongs to the transferase hexapeptide repeat family. As to quaternary structure, homomultimer. Interacts with OASA1 and CYP20-3. Component of the cysteine synthase complex (CSC) composed of two OAS-TL dimers and one SAT hexamer. As to expression, mostly expressed in leaves. Localized in cortex, trichomes and vascular tissues, particularly in phloem.

Its subcellular location is the plastid. It is found in the chloroplast. The protein localises to the cytoplasm. It carries out the reaction L-serine + acetyl-CoA = O-acetyl-L-serine + CoA. It functions in the pathway amino-acid biosynthesis; L-cysteine biosynthesis; L-cysteine from L-serine: step 1/2. Serine acetyltransferase which catalyzes the formation of O-acetyl-L-serine from acetyl-CoA and L-serine. Also displays O-acetylserine (thio1)-lyase activity in vitro. May be involved in detoxification process by mediating the production of glutathione. In Arabidopsis thaliana (Mouse-ear cress), this protein is Serine acetyltransferase 1, chloroplastic (SAT1).